Consider the following 471-residue polypeptide: Methylenetetrahydrofolate--tRNA-(uracil-5-)-methyltransferase TrmFO (471 aa).

FAD is bound at residue 9-14; it reads GGGLSG.

This sequence belongs to the MnmG family. TrmFO subfamily. The cofactor is FAD.

The protein resides in the cytoplasm. It catalyses the reaction uridine(54) in tRNA + (6R)-5,10-methylene-5,6,7,8-tetrahydrofolate + NADH + H(+) = 5-methyluridine(54) in tRNA + (6S)-5,6,7,8-tetrahydrofolate + NAD(+). The enzyme catalyses uridine(54) in tRNA + (6R)-5,10-methylene-5,6,7,8-tetrahydrofolate + NADPH + H(+) = 5-methyluridine(54) in tRNA + (6S)-5,6,7,8-tetrahydrofolate + NADP(+). In terms of biological role, catalyzes the folate-dependent formation of 5-methyl-uridine at position 54 (M-5-U54) in all tRNAs. This is Methylenetetrahydrofolate--tRNA-(uracil-5-)-methyltransferase TrmFO from Beijerinckia indica subsp. indica (strain ATCC 9039 / DSM 1715 / NCIMB 8712).